The chain runs to 153 residues: D-aminoacyl-tRNA deacylase (153 aa).

Positions 140-141 match the Gly-cisPro motif, important for rejection of L-amino acids motif; it reads GP.

It belongs to the DTD family. In terms of assembly, homodimer.

The protein resides in the cytoplasm. The catalysed reaction is glycyl-tRNA(Ala) + H2O = tRNA(Ala) + glycine + H(+). It carries out the reaction a D-aminoacyl-tRNA + H2O = a tRNA + a D-alpha-amino acid + H(+). In terms of biological role, an aminoacyl-tRNA editing enzyme that deacylates mischarged D-aminoacyl-tRNAs. Also deacylates mischarged glycyl-tRNA(Ala), protecting cells against glycine mischarging by AlaRS. Acts via tRNA-based rather than protein-based catalysis; rejects L-amino acids rather than detecting D-amino acids in the active site. By recycling D-aminoacyl-tRNA to D-amino acids and free tRNA molecules, this enzyme counteracts the toxicity associated with the formation of D-aminoacyl-tRNA entities in vivo and helps enforce protein L-homochirality. The chain is D-aminoacyl-tRNA deacylase from Trichodesmium erythraeum (strain IMS101).